Here is a 360-residue protein sequence, read N- to C-terminus: DNA replication and repair protein RecF (360 aa).

30-37 serves as a coordination point for ATP; sequence GANGSGKT.

It belongs to the RecF family.

The protein localises to the cytoplasm. Functionally, the RecF protein is involved in DNA metabolism; it is required for DNA replication and normal SOS inducibility. RecF binds preferentially to single-stranded, linear DNA. It also seems to bind ATP. In Acinetobacter baumannii (strain AB307-0294), this protein is DNA replication and repair protein RecF.